Reading from the N-terminus, the 228-residue chain is MQKLKQQVFDANMDLPRYGLVTFTWGNVSAIDRERGLVVIKPSGVAYETMKVDDMVVVDMDGKVVEGGYRPSSDTATHLALYQRYPSLGGVVHTHSTHATAWAQAGMAIPALGTTHADYFFGDIPCTRALSEEEVQGEYELNTGKVIIETLGEVEPLHTPGIVVYQHGPFAWGKDAHDAVHNAVVMEEVAKMAWIARGINPALNPIDDYLMNKHFMRKHGPNAYYGQK.

Substrate-binding positions include 26–27, 43–44, and 72–73; these read GN, SG, and SS. Residues aspartate 74, histidine 93, and histidine 95 each coordinate Zn(2+). The active-site Proton donor/acceptor is aspartate 118. Zn(2+) is bound at residue histidine 167. Tyrosine 225 serves as the catalytic Proton donor/acceptor.

It belongs to the aldolase class II family. AraD/FucA subfamily. It depends on Zn(2+) as a cofactor.

The catalysed reaction is L-ribulose 5-phosphate = D-xylulose 5-phosphate. It functions in the pathway cofactor degradation; L-ascorbate degradation; D-xylulose 5-phosphate from L-ascorbate: step 4/4. Catalyzes the isomerization of L-ribulose 5-phosphate to D-xylulose 5-phosphate. Is involved in the anaerobic L-ascorbate utilization. The sequence is that of L-ribulose-5-phosphate 4-epimerase UlaF from Salmonella choleraesuis (strain SC-B67).